Reading from the N-terminus, the 283-residue chain is Pantothenate synthetase (283 aa).

Residue 30–37 (MGYLHDGH) coordinates ATP. The Proton donor role is filled by His37. Gln61 contacts (R)-pantoate. A beta-alanine-binding site is contributed by Gln61. 147–150 (GKKD) is a binding site for ATP. Residue Gln153 coordinates (R)-pantoate. ATP contacts are provided by residues Ile176 and 184-187 (MSSR).

This sequence belongs to the pantothenate synthetase family. In terms of assembly, homodimer.

Its subcellular location is the cytoplasm. The enzyme catalyses (R)-pantoate + beta-alanine + ATP = (R)-pantothenate + AMP + diphosphate + H(+). Its pathway is cofactor biosynthesis; (R)-pantothenate biosynthesis; (R)-pantothenate from (R)-pantoate and beta-alanine: step 1/1. Catalyzes the condensation of pantoate with beta-alanine in an ATP-dependent reaction via a pantoyl-adenylate intermediate. The chain is Pantothenate synthetase from Geobacter sulfurreducens (strain ATCC 51573 / DSM 12127 / PCA).